A 195-amino-acid chain; its full sequence is Ribonuclease HII (195 aa).

In terms of domain architecture, RNase H type-2 spans 6-195; that stretch reads SLIAGVDEVG…KSFISRLEIN (190 aa). A divalent metal cation contacts are provided by aspartate 12, glutamate 13, and aspartate 108.

The protein belongs to the RNase HII family. Requires Mn(2+) as cofactor. It depends on Mg(2+) as a cofactor.

Its subcellular location is the cytoplasm. The catalysed reaction is Endonucleolytic cleavage to 5'-phosphomonoester.. Its function is as follows. Endonuclease that specifically degrades the RNA of RNA-DNA hybrids. The protein is Ribonuclease HII of Prochlorococcus marinus (strain NATL1A).